A 570-amino-acid chain; its full sequence is Sulfite reductase [NADPH] hemoprotein beta-component (570 aa).

4 residues coordinate [4Fe-4S] cluster: cysteine 434, cysteine 440, cysteine 479, and cysteine 483. Siroheme is bound at residue cysteine 483.

This sequence belongs to the nitrite and sulfite reductase 4Fe-4S domain family. As to quaternary structure, alpha(8)-beta(8). The alpha component is a flavoprotein, the beta component is a hemoprotein. Requires siroheme as cofactor. [4Fe-4S] cluster is required as a cofactor.

It carries out the reaction hydrogen sulfide + 3 NADP(+) + 3 H2O = sulfite + 3 NADPH + 4 H(+). The protein operates within sulfur metabolism; hydrogen sulfide biosynthesis; hydrogen sulfide from sulfite (NADPH route): step 1/1. In terms of biological role, component of the sulfite reductase complex that catalyzes the 6-electron reduction of sulfite to sulfide. This is one of several activities required for the biosynthesis of L-cysteine from sulfate. The polypeptide is Sulfite reductase [NADPH] hemoprotein beta-component (Salmonella heidelberg (strain SL476)).